A 294-amino-acid polypeptide reads, in one-letter code: Shikimate kinase (294 aa).

87–97 contacts ATP; the sequence is PLAGGLKSSSA.

This sequence belongs to the GHMP kinase family. Archaeal shikimate kinase subfamily.

Its subcellular location is the cytoplasm. The enzyme catalyses shikimate + ATP = 3-phosphoshikimate + ADP + H(+). It participates in metabolic intermediate biosynthesis; chorismate biosynthesis; chorismate from D-erythrose 4-phosphate and phosphoenolpyruvate: step 5/7. The chain is Shikimate kinase (aroK) from Methanosarcina acetivorans (strain ATCC 35395 / DSM 2834 / JCM 12185 / C2A).